The chain runs to 583 residues: 2-succinyl-5-enolpyruvyl-6-hydroxy-3-cyclohexene-1-carboxylate synthase (583 aa).

Belongs to the TPP enzyme family. MenD subfamily. As to quaternary structure, homodimer. Requires Mg(2+) as cofactor. Mn(2+) is required as a cofactor. Thiamine diphosphate serves as cofactor.

It catalyses the reaction isochorismate + 2-oxoglutarate + H(+) = 5-enolpyruvoyl-6-hydroxy-2-succinyl-cyclohex-3-ene-1-carboxylate + CO2. Its pathway is quinol/quinone metabolism; 1,4-dihydroxy-2-naphthoate biosynthesis; 1,4-dihydroxy-2-naphthoate from chorismate: step 2/7. It functions in the pathway quinol/quinone metabolism; menaquinone biosynthesis. Functionally, catalyzes the thiamine diphosphate-dependent decarboxylation of 2-oxoglutarate and the subsequent addition of the resulting succinic semialdehyde-thiamine pyrophosphate anion to isochorismate to yield 2-succinyl-5-enolpyruvyl-6-hydroxy-3-cyclohexene-1-carboxylate (SEPHCHC). The chain is 2-succinyl-5-enolpyruvyl-6-hydroxy-3-cyclohexene-1-carboxylate synthase from Roseiflexus sp. (strain RS-1).